The primary structure comprises 373 residues: Indole glucosinolate O-methyltransferase 3 (373 aa).

Positions 217, 240, 260, 261, and 274 each coordinate S-adenosyl-L-homocysteine. The active-site Proton acceptor is the H278.

Belongs to the class I-like SAM-binding methyltransferase superfamily. Cation-independent O-methyltransferase family.

Its pathway is secondary metabolite biosynthesis. Functionally, involved in indole glucosinolate biosynthesis. Catalyzes methoxylation reactions of the glucosinolate indole ring. Converts the hydroxy intermediates 4-hydroxy-indol-3-yl-methylglucosinolate (4OH-I3M) and 1-hydroxy-indol-3-yl-methylglucosinolate (1OH-I3M) to 4-methoxy-indol-3-yl-methylglucosinolate (4MO-I3M) and 1-methoxy-indol-3-yl-methylglucosinolate(1MO-I3M), respectively. This Arabidopsis thaliana (Mouse-ear cress) protein is Indole glucosinolate O-methyltransferase 3.